Reading from the N-terminus, the 347-residue chain is GMP reductase (347 aa).

Position 108–131 (108–131 (ADFEKTVQILALDPALNFVCIDVA)) interacts with NADP(+). K(+) is bound by residues Gly181 and Gly183. Cys186 functions as the Thioimidate intermediate in the catalytic mechanism. 216–239 (IVSDGGCTMPGDVAKAFGGGADFV) contacts NADP(+).

The protein belongs to the IMPDH/GMPR family. GuaC type 1 subfamily. Homotetramer.

The catalysed reaction is IMP + NH4(+) + NADP(+) = GMP + NADPH + 2 H(+). In terms of biological role, catalyzes the irreversible NADPH-dependent deamination of GMP to IMP. It functions in the conversion of nucleobase, nucleoside and nucleotide derivatives of G to A nucleotides, and in maintaining the intracellular balance of A and G nucleotides. This Salmonella paratyphi B (strain ATCC BAA-1250 / SPB7) protein is GMP reductase.